We begin with the raw amino-acid sequence, 158 residues long: Glutathione peroxidase homolog BsaA (158 aa).

C36 is an active-site residue.

The protein belongs to the glutathione peroxidase family.

The polypeptide is Glutathione peroxidase homolog BsaA (bsaA) (Staphylococcus aureus (strain COL)).